The primary structure comprises 828 residues: MKLSRRHFMKANAVAAAAAVAGITIPIAVRAATEQSDAIHWDKAPCRFCGVGCGVLVGTQNGRIVASQGDPEAPVNRGLNCIKGYFLPKIMYGQDRLTQPLLRMRNGQFDKEGEFTPISWDKAFDIMAEKFKTALKEKGPNAIGMFGSGQSTIWEGYASAKLFKAGFRSNNIDPNARHCMASAVVGFMRTFGMDEPMGCYDDIEQTDAFVLWGSNMAEMHPILWSRITDRRLSNSNVTVAVLSTYQHRSFELADNGMVFTPQTDLAILNYIANYIIQNNAVNEAFFTRHVNLRRGVTDIGYGLRPTHPLEKAAKNPGSDASEPMSFEEYKAFVADYTLEKTVAISGVPADQLEALAKLYADPKKKVISYWTMGFNQHTRGVWANNLVYNIHLLTGKISQPGCGPFSLTGQPSACGTAREVGTFAHRLPADMVVTNEKHRAIAEKLWQLPTGTIPEKIGLHAVAQDRALKDGTLNAYWVMCNNNMQAGPNINQERMPGWRDPRNFIVVSDPYPTISALAADLILPTAMWVEKEGAYGNAERRTQFWRQQVKAPGESKSDLWQVVSFAKRFTVEDVWPEELLAQKPAYRGKTLYDVLFANDVTTRFPLSELAENQLNDESREFGFYLQKGLFEEYAAFGRGHGHDLAPFDAYHKVRGLRWPVVDGKETQWRYSEGHDPYVKAGEAYRFYGKPDGKAVIFALPYEPAAEAPDEEYDLWFSTGRVLEHWHTGSMTRRVPELHRAFPEAVLFIHPQDAKARDLRRGEKVRIISRRGEVISVVETRGRNKPPRGLVYMPFFDAAQMTNVLTLDATDPLSKETDFKKCAVKLAKV.

The segment at residues 1–31 is a signal peptide (tat-type signal); sequence MKLSRRHFMKANAVAAAAAVAGITIPIAVRA. Positions 39–95 constitute a 4Fe-4S Mo/W bis-MGD-type domain; sequence IHWDKAPCRFCGVGCGVLVGTQNGRIVASQGDPEAPVNRGLNCIKGYFLPKIMYGQD. 4 residues coordinate [4Fe-4S] cluster: cysteine 46, cysteine 49, cysteine 53, and cysteine 81. Residues lysine 83, glutamine 150, asparagine 175, cysteine 179, 212-219, 243-247, 262-264, methionine 372, glutamine 376, asparagine 482, 508-509, lysine 531, aspartate 558, and 718-727 contribute to the Mo-bis(molybdopterin guanine dinucleotide) site; these read WGSNMAEM, STYQH, QTD, SD, and TGRVLEHWHT. Phenylalanine 794 is a substrate binding site. Residues asparagine 802 and lysine 819 each coordinate Mo-bis(molybdopterin guanine dinucleotide).

The protein belongs to the prokaryotic molybdopterin-containing oxidoreductase family. NasA/NapA/NarB subfamily. Component of the periplasmic nitrate reductase NapAB complex composed of NapA and NapB. [4Fe-4S] cluster serves as cofactor. Mo-bis(molybdopterin guanine dinucleotide) is required as a cofactor. Predicted to be exported by the Tat system. The position of the signal peptide cleavage has not been experimentally proven.

It localises to the periplasm. It catalyses the reaction 2 Fe(II)-[cytochrome] + nitrate + 2 H(+) = 2 Fe(III)-[cytochrome] + nitrite + H2O. Catalytic subunit of the periplasmic nitrate reductase complex NapAB. Receives electrons from NapB and catalyzes the reduction of nitrate to nitrite. This is Periplasmic nitrate reductase from Pectobacterium atrosepticum (strain SCRI 1043 / ATCC BAA-672) (Erwinia carotovora subsp. atroseptica).